The chain runs to 223 residues: Ribosome maturation factor RimM (223 aa).

Residues 1 to 12 (MARRPGSSSRGP) are compositionally biased toward low complexity. 2 disordered regions span residues 1-44 (MARR…DPGL) and 203-223 (VADP…DDPG). A PRC barrel domain is found at 135–210 (DEDEFFLTDL…KVVADPPDDL (76 aa)).

This sequence belongs to the RimM family. In terms of assembly, binds ribosomal protein uS19.

Its subcellular location is the cytoplasm. Its function is as follows. An accessory protein needed during the final step in the assembly of 30S ribosomal subunit, possibly for assembly of the head region. Essential for efficient processing of 16S rRNA. May be needed both before and after RbfA during the maturation of 16S rRNA. It has affinity for free ribosomal 30S subunits but not for 70S ribosomes. In Methylorubrum extorquens (strain CM4 / NCIMB 13688) (Methylobacterium extorquens), this protein is Ribosome maturation factor RimM.